A 230-amino-acid chain; its full sequence is Large ribosomal subunit protein uL1 (230 aa).

The protein belongs to the universal ribosomal protein uL1 family. As to quaternary structure, part of the 50S ribosomal subunit.

Functionally, binds directly to 23S rRNA. The L1 stalk is quite mobile in the ribosome, and is involved in E site tRNA release. In terms of biological role, protein L1 is also a translational repressor protein, it controls the translation of the L11 operon by binding to its mRNA. This Rubrobacter xylanophilus (strain DSM 9941 / JCM 11954 / NBRC 16129 / PRD-1) protein is Large ribosomal subunit protein uL1.